The chain runs to 131 residues: Large ribosomal subunit protein bL17 (131 aa).

The protein belongs to the bacterial ribosomal protein bL17 family. Part of the 50S ribosomal subunit. Contacts protein L32.

The protein is Large ribosomal subunit protein bL17 of Cupriavidus metallidurans (strain ATCC 43123 / DSM 2839 / NBRC 102507 / CH34) (Ralstonia metallidurans).